The sequence spans 203 residues: Outer-membrane lipoprotein carrier protein (203 aa).

The signal sequence occupies residues 1–20 (MRRGRVWLAALCLAAGAAHA).

It belongs to the LolA family. As to quaternary structure, monomer.

Its subcellular location is the periplasm. Participates in the translocation of lipoproteins from the inner membrane to the outer membrane. Only forms a complex with a lipoprotein if the residue after the N-terminal Cys is not an aspartate (The Asp acts as a targeting signal to indicate that the lipoprotein should stay in the inner membrane). In Methylibium petroleiphilum (strain ATCC BAA-1232 / LMG 22953 / PM1), this protein is Outer-membrane lipoprotein carrier protein.